A 310-amino-acid chain; its full sequence is MKNLPIKIVSTGRYAPDNIMTNDDFSKILDTNDEWITTRTGIKRRHIAQGETAIDMAYKAALKAVENKNYDKEKIDLIIVASITSPVKTPSIANLIQAKLGLNHKNIVAFDINAACSGFVYAVEIAASMISSGNYKSALVIGSEHMSSILDWEDRSTAILFGDAAGAAIIEVSDNPKDNAYFWNGSRGDDTGILWIDPKVKMAGREVYKFAVDIMPKAIHKVLEKAGLTIDDIDYIIPHQANYRIIQSVAKDMNLPIERFLMNLEEYGNTSAASIPFLLDEHKTNNPEVKRVILVGFGGGFTWGAAILNV.

Residues C116 and H239 contribute to the active site. The ACP-binding stretch occupies residues 240–244 (QANYR). N269 is an active-site residue.

The protein belongs to the thiolase-like superfamily. FabH family. Homodimer.

It localises to the cytoplasm. The catalysed reaction is malonyl-[ACP] + acetyl-CoA + H(+) = 3-oxobutanoyl-[ACP] + CO2 + CoA. Its pathway is lipid metabolism; fatty acid biosynthesis. Catalyzes the condensation reaction of fatty acid synthesis by the addition to an acyl acceptor of two carbons from malonyl-ACP. Catalyzes the first condensation reaction which initiates fatty acid synthesis and may therefore play a role in governing the total rate of fatty acid production. Possesses both acetoacetyl-ACP synthase and acetyl transacylase activities. Its substrate specificity determines the biosynthesis of branched-chain and/or straight-chain of fatty acids. The protein is Beta-ketoacyl-[acyl-carrier-protein] synthase III of Acholeplasma laidlawii (strain PG-8A).